The following is a 50-amino-acid chain: Photosystem II reaction center protein M (50 aa).

A helical transmembrane segment spans residues glycine 7–isoleucine 27.

The protein belongs to the PsbM family. As to quaternary structure, PSII is composed of 1 copy each of membrane proteins PsbA, PsbB, PsbC, PsbD, PsbE, PsbF, PsbH, PsbI, PsbJ, PsbK, PsbL, PsbM, PsbT, PsbX, PsbY, Psb30/Ycf12, peripheral proteins PsbO, CyanoQ (PsbQ), PsbU, PsbV and a large number of cofactors. It forms dimeric complexes.

It is found in the cellular thylakoid membrane. Functionally, one of the components of the core complex of photosystem II (PSII). PSII is a light-driven water:plastoquinone oxidoreductase that uses light energy to abstract electrons from H(2)O, generating O(2) and a proton gradient subsequently used for ATP formation. It consists of a core antenna complex that captures photons, and an electron transfer chain that converts photonic excitation into a charge separation. This subunit is found at the monomer-monomer interface. This chain is Photosystem II reaction center protein M, found in Prochlorococcus marinus (strain MIT 9301).